A 609-amino-acid polypeptide reads, in one-letter code: Adagio protein 1 (609 aa).

The segment covering 1-17 (MEWDSGSDLSADDASSL) has biased composition (low complexity). The interval 1-24 (MEWDSGSDLSADDASSLADDEEGG) is disordered. A PAS domain is found at 32–114 (IPYPVGNLLH…SEIRKCIDEG (83 aa)). Cys-82 bears the S-4a-FMN cysteine mark. A PAC domain is found at 118–161 (QGELLNFRKDGSPLMNRLRLTPIYGDDDTITHIIGIQFFIETDI). The region spanning 195 to 241 (CGLFQLSDEVVSMKILSRLTPRDVASVSSVCRRLYVLTKNEDLWRRV) is the F-box domain. Kelch repeat units lie at residues 292 to 342 (SRCN…SSPP), 345 to 392 (RWGH…SGLA), 397 to 445 (RSWH…PAAW), 450 to 501 (RLGH…TGSG), and 516 to 564 (RLDH…NIPG).

Belongs to the ADAGIO family. As to quaternary structure, interacts with NFXL2. Interacts (via N-terminus) with GI and (via Kelch repeats) with ADO3. Component of an E3 ubiquitin ligase SCF(ADO1) complex composed of SKP1A/ASK1 (or SKP1B/ASK2), CUL1, RBX1 and ADO1. Also interacts with SKP1D/ASK4, SKP1K/ASK11, CRY1, PHYB, APRR1 and APRR5, and probably with SKP1N/ASK14 and SKP1S/ASK19. In terms of processing, may be ubiquitinated. Degraded in a proteasome-dependent manner. Post-translationally, FMN binds covalently to cysteine after exposure to blue light and is reversed in the dark. As to expression, ubiquitously expressed with higher levels in cotyledons and leaves.

Its subcellular location is the nucleus. It is found in the cytoplasm. The protein operates within protein modification; protein ubiquitination. Its function is as follows. Component of an E3 ubiquitin ligase complex that plays a central role in blue light-dependent circadian cycles. Acts as a blue light photoreceptor, due to the presence of FMN, that mediates light-regulated protein degradation of critical clock components by targeting them to the proteasome complex. The SCF(ADO1) E3 ubiquitin ligase complex is involved in the regulation of circadian clock-dependent processes including the transition to flowering time, hypocotyl elongation, cotyledons and leaf movement rhythms. APRR1/TOC1 and APRR5, but not 'GIGANTEA', are proteolytic substrates of this ubiquitin ligase complex. Blue light enhances cooperative stabilization of 'GIGANTEA' and ADO1/ZTL, leading to amplification and sharpening of the expression profile of APRR1/TOC1. ADO1/ZTL interacts with ADO3, preventing the interaction of ADO3 with CDF1. This is Adagio protein 1 (ADO1) from Arabidopsis thaliana (Mouse-ear cress).